The sequence spans 152 residues: Large ribosomal subunit protein bL9 (152 aa).

This sequence belongs to the bacterial ribosomal protein bL9 family.

Its function is as follows. Binds to the 23S rRNA. This chain is Large ribosomal subunit protein bL9, found in Acaryochloris marina (strain MBIC 11017).